The chain runs to 400 residues: Acetate kinase (400 aa).

N10 lines the Mg(2+) pocket. K17 is a binding site for ATP. R91 lines the substrate pocket. Residue D150 is the Proton donor/acceptor of the active site. ATP-binding positions include 210–214 (HLGNG), 285–287 (DCR), and 333–337 (GIGEN). E387 is a binding site for Mg(2+).

It belongs to the acetokinase family. Homodimer. It depends on Mg(2+) as a cofactor. The cofactor is Mn(2+).

The protein resides in the cytoplasm. It carries out the reaction acetate + ATP = acetyl phosphate + ADP. The protein operates within metabolic intermediate biosynthesis; acetyl-CoA biosynthesis; acetyl-CoA from acetate: step 1/2. Functionally, catalyzes the formation of acetyl phosphate from acetate and ATP. Can also catalyze the reverse reaction. The protein is Acetate kinase of Escherichia coli O157:H7.